A 285-amino-acid polypeptide reads, in one-letter code: tRNA uridine(34) hydroxylase (285 aa).

Residues 130–225 (RGDDVVFFDG…YGEAFGDTGL (96 aa)) form the Rhodanese domain. Cys185 serves as the catalytic Cysteine persulfide intermediate.

This sequence belongs to the TrhO family.

It carries out the reaction uridine(34) in tRNA + AH2 + O2 = 5-hydroxyuridine(34) in tRNA + A + H2O. In terms of biological role, catalyzes oxygen-dependent 5-hydroxyuridine (ho5U) modification at position 34 in tRNAs. The polypeptide is tRNA uridine(34) hydroxylase (Rhodococcus jostii (strain RHA1)).